The following is a 68-amino-acid chain: Protein transport protein Sec61 subunit gamma (68 aa).

Over Met1–Glu32 the chain is Cytoplasmic. A helical membrane pass occupies residues Phe33–Ile61. Residues Asn62–Ser68 lie on the Extracellular side of the membrane.

Belongs to the SecE/SEC61-gamma family. Heterotrimeric complex composed of SEC61-alpha, SEC61-beta and SEC61-gamma. Component of the ribosome-associated ER translocon complex.

It is found in the endoplasmic reticulum membrane. In terms of biological role, necessary for protein translocation in the endoplasmic reticulum and multi-pass membrane protein biogenesis. This Ciona intestinalis (Transparent sea squirt) protein is Protein transport protein Sec61 subunit gamma (SEC61G).